Reading from the N-terminus, the 134-residue chain is Putative pre-16S rRNA nuclease (134 aa).

The protein belongs to the YqgF nuclease family.

The protein resides in the cytoplasm. Its function is as follows. Could be a nuclease involved in processing of the 5'-end of pre-16S rRNA. The chain is Putative pre-16S rRNA nuclease from Helicobacter pylori (strain ATCC 700392 / 26695) (Campylobacter pylori).